The sequence spans 793 residues: MSDYRSFGSNYHPSSQSRKISIGVMADSQPKRNLVPDKDDGDVIARVEKLKSATVTELQANKKEKSDLAAKQRNSAQVTGHVTSPWRSPRSSHRKLGTLESVLCKQTSSLSGSKGLNKGLNGAHQTPARESFQNCPISSPQHSLGELNGGRNDRVMDRSPERMEEPPSAVLQQKVASQREKMDKPGKETNGTTDVLRSKLWEILGKASPANNEDVNSETPEVEKTNFKLSQDKGSNDDPLIKPRHNSDSIETDSESPENATRRPVTRSLLQRRVGAKGVQKKTKAGANLGRKCTEQVNSVFSFEEGLRGKIGTAVNSSVMPKKQRGRRKNTVVKCRKAHSRKKDEADWSRKEASKSNTPPRSESTETGKRSSSSDKKGSSHDLHPQSKARKQKPDISTREGDFHPSPEAEAAALPEMSQGLSKNGDKHERPSNIFREKSVEPENEFQSPTFGYKAPISSPSPCCSPEASPLQPRNISPTLDETETPIFSFGTKKTSQGTTGQASDTEKRLPDFLEKKRDYSFRRESSPEPNEDLVLSDPSSDERDSDGSREDSPVLGHNISPEERETANWTNERSMLGPSSVKRNSNLKGIGRVVLSPPSPLSKGIDKTDSFQHCSEMDEDEDEGLGRAVALFAMALQNFERKLKSAAEKKSSEIIASVSEEIHLELENIKSHIITEAGKTSNLAKTKRKHAETRLQEQEEKMRMIHEKFKDDVSHHLEDFKSTIEELEANQSELKGSIKKQRTSHQKLIAHFEGGIETKLDDATKRIDSVNKSARGKMLQLKMIVAECLRDD.

Disordered stretches follow at residues 1 to 40 (MSDYRSFGSNYHPSSQSRKISIGVMADSQPKRNLVPDKDD), 58 to 97 (LQANKKEKSDLAAKQRNSAQVTGHVTSPWRSPRSSHRKLG), 110 to 287 (LSGS…KAGA), and 305 to 586 (EGLR…KRNS). The span at 7-19 (FGSNYHPSSQSRK) shows a compositional bias: polar residues. Residues 60–70 (ANKKEKSDLAA) show a composition bias toward basic and acidic residues. The span at 72-86 (QRNSAQVTGHVTSPW) shows a compositional bias: polar residues. Residues 110–122 (LSGSKGLNKGLNG) are compositionally biased toward low complexity. Polar residues predominate over residues 131 to 142 (SFQNCPISSPQH). Composition is skewed to basic and acidic residues over residues 151–165 (RNDRVMDRSPERMEE) and 177–187 (SQREKMDKPGK). Positions 209–219 (PANNEDVNSET) are enriched in polar residues. Residues 221–248 (EVEKTNFKLSQDKGSNDDPLIKPRHNSD) are compositionally biased toward basic and acidic residues. Residues 322 to 341 (KKQRGRRKNTVVKCRKAHSR) are compositionally biased toward basic residues. Composition is skewed to basic and acidic residues over residues 342-354 (KKDEADWSRKEAS), 363-385 (ESTETGKRSSSSDKKGSSHDLHP), 392-407 (QKPDISTREGDFHPSP), and 424-441 (NGDKHERPSNIFREKSVE). 2 stretches are compositionally biased toward low complexity: residues 455-470 (APISSPSPCCSPEASP) and 491-502 (GTKKTSQGTTGQ). Basic and acidic residues-rich tracts occupy residues 505-527 (DTEKRLPDFLEKKRDYSFRRESS) and 541-553 (SDERDSDGSREDS). Positions 682–745 (SNLAKTKRKH…KGSIKKQRTS (64 aa)) form a coiled coil.

As to quaternary structure, interacts with ASY1.

The protein localises to the chromosome. The protein resides in the nucleus. Functionally, required for normal meiosis in male and female gametophytes. Acts with ASY1 at the interface between the developing chromosome axes and the recombination machinery to ensure interhomolog recombination. Required for synaptonemal complex formation during meiosis. This Arabidopsis thaliana (Mouse-ear cress) protein is Meiosis-specific protein ASY3.